Here is a 259-residue protein sequence, read N- to C-terminus: Proteasome subunit beta type-4 (259 aa).

It belongs to the peptidase T1B family. The 26S proteasome consists of a 20S proteasome core and two 19S regulatory subunits. The 20S proteasome core is composed of 28 subunits that are arranged in four stacked rings, resulting in a barrel-shaped structure. The two end rings are each formed by seven alpha subunits, and the two central rings are each formed by seven beta subunits. The catalytic chamber with the active sites is on the inside of the barrel.

The protein resides in the cytoplasm. The protein localises to the nucleus. Functionally, non-catalytic component of the proteasome, a multicatalytic proteinase complex which is characterized by its ability to cleave peptides with Arg, Phe, Tyr, Leu, and Glu adjacent to the leaving group at neutral or slightly basic pH. The proteasome has an ATP-dependent proteolytic activity. In Dictyostelium discoideum (Social amoeba), this protein is Proteasome subunit beta type-4 (psmB4-1).